The following is a 63-amino-acid chain: Cytochrome c oxidase subunit 5C (63 aa).

A helical transmembrane segment spans residues 16–34 (VVKEIFIGLTLGLVAGGMW).

The protein belongs to the cytochrome c oxidase subunit 5C family.

The protein resides in the mitochondrion inner membrane. This protein is one of the nuclear-coded polypeptide chains of cytochrome c oxidase, the terminal oxidase in mitochondrial electron transport. The chain is Cytochrome c oxidase subunit 5C (COX5C) from Hordeum vulgare (Barley).